The following is a 277-amino-acid chain: Shikimate dehydrogenase (NADP(+)) (277 aa).

Shikimate-binding positions include 14-16 (SKS) and threonine 61. Lysine 65 (proton acceptor) is an active-site residue. Aspartate 77 lines the NADP(+) pocket. Residues asparagine 86 and aspartate 102 each coordinate shikimate. Residues 127 to 131 (GAGGA), 151 to 156 (NRTPDK), and methionine 215 each bind NADP(+). A shikimate-binding site is contributed by tyrosine 217. Residue glycine 239 coordinates NADP(+).

Belongs to the shikimate dehydrogenase family. In terms of assembly, homodimer.

It carries out the reaction shikimate + NADP(+) = 3-dehydroshikimate + NADPH + H(+). It functions in the pathway metabolic intermediate biosynthesis; chorismate biosynthesis; chorismate from D-erythrose 4-phosphate and phosphoenolpyruvate: step 4/7. Its function is as follows. Involved in the biosynthesis of the chorismate, which leads to the biosynthesis of aromatic amino acids. Catalyzes the reversible NADPH linked reduction of 3-dehydroshikimate (DHSA) to yield shikimate (SA). The sequence is that of Shikimate dehydrogenase (NADP(+)) from Nitrosomonas eutropha (strain DSM 101675 / C91 / Nm57).